The primary structure comprises 81 residues: MRKGVHPKNNLVVFKDGSNGAMFLTRSTLNSKETIKYIDGKEYPLITVEITSKSHPFYTGQQKFVDAAGRIDKFNKRYKKS.

It belongs to the bacterial ribosomal protein bL31 family. Type B subfamily. Part of the 50S ribosomal subunit.

The protein is Large ribosomal subunit protein bL31B of Borreliella afzelii (strain PKo) (Borrelia afzelii).